Reading from the N-terminus, the 162-residue chain is Cyclic pyranopterin monophosphate synthase (162 aa).

Substrate contacts are provided by residues 75 to 77 and 113 to 114; these read LCH and ME. Aspartate 128 is an active-site residue.

The protein belongs to the MoaC family. As to quaternary structure, homohexamer; trimer of dimers.

It carries out the reaction (8S)-3',8-cyclo-7,8-dihydroguanosine 5'-triphosphate = cyclic pyranopterin phosphate + diphosphate. It functions in the pathway cofactor biosynthesis; molybdopterin biosynthesis. Catalyzes the conversion of (8S)-3',8-cyclo-7,8-dihydroguanosine 5'-triphosphate to cyclic pyranopterin monophosphate (cPMP). The chain is Cyclic pyranopterin monophosphate synthase from Burkholderia vietnamiensis (strain G4 / LMG 22486) (Burkholderia cepacia (strain R1808)).